The sequence spans 501 residues: Lysine--tRNA ligase (501 aa).

Mg(2+) is bound by residues glutamate 410 and glutamate 417.

This sequence belongs to the class-II aminoacyl-tRNA synthetase family. As to quaternary structure, homodimer. It depends on Mg(2+) as a cofactor.

Its subcellular location is the cytoplasm. It carries out the reaction tRNA(Lys) + L-lysine + ATP = L-lysyl-tRNA(Lys) + AMP + diphosphate. This chain is Lysine--tRNA ligase, found in Shewanella pealeana (strain ATCC 700345 / ANG-SQ1).